The primary structure comprises 216 residues: Kynurenine formamidase (216 aa).

Residue W25 coordinates substrate. Zn(2+)-binding residues include H55, H59, and D61. H65 acts as the Proton donor/acceptor in catalysis. Positions 167 and 179 each coordinate Zn(2+).

The protein belongs to the Cyclase 1 superfamily. KynB family. As to quaternary structure, homodimer. Requires Zn(2+) as cofactor.

The catalysed reaction is N-formyl-L-kynurenine + H2O = L-kynurenine + formate + H(+). Its pathway is amino-acid degradation; L-tryptophan degradation via kynurenine pathway; L-kynurenine from L-tryptophan: step 2/2. Its function is as follows. Catalyzes the hydrolysis of N-formyl-L-kynurenine to L-kynurenine, the second step in the kynurenine pathway of tryptophan degradation. The chain is Kynurenine formamidase from Cupriavidus necator (strain ATCC 17699 / DSM 428 / KCTC 22496 / NCIMB 10442 / H16 / Stanier 337) (Ralstonia eutropha).